The sequence spans 654 residues: MFLSLLETCIRSRNLVLGQVIHQHLLKRSLTLSSSTVLVNLTRLYASCNEVELARHVFDEIPHPRINPIAWDLMIRAYASNDFAEKALDLYYKMLNSGVRPTKYTYPFVLKACAGLRAIDDGKLIHSHVNCSDFATDMYVCTALVDFYAKCGELEMAIKVFDEMPKRDMVAWNAMISGFSLHCCLTDVIGLFLDMRRIDGLSPNLSTIVGMFPALGRAGALREGKAVHGYCTRMGFSNDLVVKTGILDVYAKSKCIIYARRVFDLDFKKNEVTWSAMIGGYVENEMIKEAGEVFFQMLVNDNVAMVTPVAIGLILMGCARFGDLSGGRCVHCYAVKAGFILDLTVQNTIISFYAKYGSLCDAFRQFSEIGLKDVISYNSLITGCVVNCRPEESFRLFHEMRTSGIRPDITTLLGVLTACSHLAALGHGSSCHGYCVVHGYAVNTSICNALMDMYTKCGKLDVAKRVFDTMHKRDIVSWNTMLFGFGIHGLGKEALSLFNSMQETGVNPDEVTLLAILSACSHSGLVDEGKQLFNSMSRGDFNVIPRIDHYNCMTDLLARAGYLDEAYDFVNKMPFEPDIRVLGTLLSACWTYKNAELGNEVSKKMQSLGETTESLVLLSNTYSAAERWEDAARIRMIQKKRGLLKTPGYSWVDV.

PPR repeat units follow at residues 1-32 (MFLSLLETCIRSRNLVLGQVIHQHLLKRSLTL), 34-64 (SSTVLVNLTRLYASCNEVELARHVFDEIPHP), 67-101 (NPIAWDLMIRAYASNDFAEKALDLYYKMLNSGVRP), 102-136 (TKYTYPFVLKACAGLRAIDDGKLIHSHVNCSDFAT), 137-171 (DMYVCTALVDFYAKCGELEMAIKVFDEMPKRDMVA), 172-203 (WNAMISGFSLHCCLTDVIGLFLDMRRIDGLSP), 204-238 (NLSTIVGMFPALGRAGALREGKAVHGYCTRMGFSN), 239-269 (DLVVKTGILDVYAKSKCIIYARRVFDLDFKK), 270-304 (NEVTWSAMIGGYVENEMIKEAGEVFFQMLVNDNVA), 307-341 (TPVAIGLILMGCARFGDLSGGRCVHCYAVKAGFIL), 342-372 (DLTVQNTIISFYAKYGSLCDAFRQFSEIGLK), 373-407 (DVISYNSLITGCVVNCRPEESFRLFHEMRTSGIRP), 408-442 (DITTLLGVLTACSHLAALGHGSSCHGYCVVHGYAV), 443-473 (NTSICNALMDMYTKCGKLDVAKRVFDTMHKR), 474-508 (DIVSWNTMLFGFGIHGLGKEALSLFNSMQETGVNP), 509-543 (DEVTLLAILSACSHSGLVDEGKQLFNSMSRGDFNV), and 546-576 (RIDHYNCMTDLLARAGYLDEAYDFVNKMPFE). A type E motif; degenerate region spans residues 581-654 (VLGTLLSACW…KTPGYSWVDV (74 aa)).

It belongs to the PPR family. PCMP-E subfamily.

This chain is Pentatricopeptide repeat-containing protein At3g16610 (PCMP-E91), found in Arabidopsis thaliana (Mouse-ear cress).